Consider the following 245-residue polypeptide: Small ribosomal subunit protein uS3 (245 aa).

One can recognise a KH type-2 domain in the interval 39 to 111; the sequence is IRNFINKNYS…EVFFNVIEIK (73 aa).

The protein belongs to the universal ribosomal protein uS3 family. Part of the 30S ribosomal subunit. Forms a tight complex with proteins S10 and S14.

Binds the lower part of the 30S subunit head. Binds mRNA in the 70S ribosome, positioning it for translation. The sequence is that of Small ribosomal subunit protein uS3 from Phytoplasma mali (strain AT).